A 432-amino-acid chain; its full sequence is Adenylosuccinate synthetase (432 aa).

GTP-binding positions include 13-19 (GDEGKGK) and 41-43 (GHT). The active-site Proton acceptor is aspartate 14. Mg(2+) is bound by residues aspartate 14 and glycine 41. Residues 14 to 17 (DEGK), 39 to 42 (NAGH), threonine 130, arginine 144, glutamine 225, threonine 240, and arginine 304 contribute to the IMP site. The active-site Proton donor is histidine 42. 300-306 (AVTGRPR) contributes to the substrate binding site. GTP-binding positions include arginine 306, 332–334 (KLD), and 415–417 (STG).

Belongs to the adenylosuccinate synthetase family. As to quaternary structure, homodimer. Mg(2+) is required as a cofactor.

It is found in the cytoplasm. The enzyme catalyses IMP + L-aspartate + GTP = N(6)-(1,2-dicarboxyethyl)-AMP + GDP + phosphate + 2 H(+). It functions in the pathway purine metabolism; AMP biosynthesis via de novo pathway; AMP from IMP: step 1/2. Plays an important role in the de novo pathway of purine nucleotide biosynthesis. Catalyzes the first committed step in the biosynthesis of AMP from IMP. This chain is Adenylosuccinate synthetase, found in Pasteurella multocida (strain Pm70).